A 557-amino-acid polypeptide reads, in one-letter code: Dihydroxy-acid dehydratase (557 aa).

Mg(2+) is bound at residue Asp78. Cys119 contacts [2Fe-2S] cluster. Asp120 and Lys121 together coordinate Mg(2+). An N6-carboxylysine modification is found at Lys121. [2Fe-2S] cluster is bound at residue Cys191. Position 442 (Glu442) interacts with Mg(2+). Catalysis depends on Ser468, which acts as the Proton acceptor.

Belongs to the IlvD/Edd family. Homodimer. It depends on [2Fe-2S] cluster as a cofactor. Mg(2+) serves as cofactor.

It carries out the reaction (2R)-2,3-dihydroxy-3-methylbutanoate = 3-methyl-2-oxobutanoate + H2O. The enzyme catalyses (2R,3R)-2,3-dihydroxy-3-methylpentanoate = (S)-3-methyl-2-oxopentanoate + H2O. It functions in the pathway amino-acid biosynthesis; L-isoleucine biosynthesis; L-isoleucine from 2-oxobutanoate: step 3/4. It participates in amino-acid biosynthesis; L-valine biosynthesis; L-valine from pyruvate: step 3/4. Its function is as follows. Functions in the biosynthesis of branched-chain amino acids. Catalyzes the dehydration of (2R,3R)-2,3-dihydroxy-3-methylpentanoate (2,3-dihydroxy-3-methylvalerate) into 2-oxo-3-methylpentanoate (2-oxo-3-methylvalerate) and of (2R)-2,3-dihydroxy-3-methylbutanoate (2,3-dihydroxyisovalerate) into 2-oxo-3-methylbutanoate (2-oxoisovalerate), the penultimate precursor to L-isoleucine and L-valine, respectively. This is Dihydroxy-acid dehydratase from Lachnospira eligens (strain ATCC 27750 / DSM 3376 / VPI C15-48 / C15-B4) (Eubacterium eligens).